The sequence spans 89 residues: Small ribosomal subunit protein uS15 (89 aa).

This sequence belongs to the universal ribosomal protein uS15 family. As to quaternary structure, part of the 30S ribosomal subunit. Forms a bridge to the 50S subunit in the 70S ribosome, contacting the 23S rRNA.

Its function is as follows. One of the primary rRNA binding proteins, it binds directly to 16S rRNA where it helps nucleate assembly of the platform of the 30S subunit by binding and bridging several RNA helices of the 16S rRNA. In terms of biological role, forms an intersubunit bridge (bridge B4) with the 23S rRNA of the 50S subunit in the ribosome. This is Small ribosomal subunit protein uS15 from Burkholderia ambifaria (strain MC40-6).